Reading from the N-terminus, the 166-residue chain is Cyclic pyranopterin monophosphate synthase (166 aa).

Substrate is bound by residues 75 to 77 (LCH) and 113 to 114 (ME). The active site involves Asp128.

The protein belongs to the MoaC family. Homohexamer; trimer of dimers.

It carries out the reaction (8S)-3',8-cyclo-7,8-dihydroguanosine 5'-triphosphate = cyclic pyranopterin phosphate + diphosphate. Its pathway is cofactor biosynthesis; molybdopterin biosynthesis. Catalyzes the conversion of (8S)-3',8-cyclo-7,8-dihydroguanosine 5'-triphosphate to cyclic pyranopterin monophosphate (cPMP). This Thermomicrobium roseum (strain ATCC 27502 / DSM 5159 / P-2) protein is Cyclic pyranopterin monophosphate synthase.